The sequence spans 278 residues: tRNA pseudouridine synthase A (278 aa).

Aspartate 52 serves as the catalytic Nucleophile. Tyrosine 110 is a binding site for substrate. The segment at 259–278 (SKRQNGTTKVEQPSSYVHEE) is disordered. Over residues 261 to 278 (RQNGTTKVEQPSSYVHEE) the composition is skewed to polar residues.

It belongs to the tRNA pseudouridine synthase TruA family. In terms of assembly, homodimer.

The catalysed reaction is uridine(38/39/40) in tRNA = pseudouridine(38/39/40) in tRNA. Its function is as follows. Formation of pseudouridine at positions 38, 39 and 40 in the anticodon stem and loop of transfer RNAs. The chain is tRNA pseudouridine synthase A from Chloroflexus aurantiacus (strain ATCC 29366 / DSM 635 / J-10-fl).